Here is a 231-residue protein sequence, read N- to C-terminus: MKRAVVVFSGGQDSTTCLVQALQQYDEVHCVTFDYGQRHRAEIDVARELALKLGARAHKVLDVTLLNELAVSSLTRDSIPVPDYEPEADGIPNTFVPGRNILFLTLAAIYAYQVKAEAVITGVCETDFSGYPDCRDEFVKALNHAVSLGMAKDIRFETPLMWIDKAETWALADYYGKLDLVRNETLTCYNGIKGDGCGHCAACNLRSNGLHHYLADKPTVMAAMKQKTGLK.

8–18 serves as a coordination point for ATP; that stretch reads FSGGQDSTTCL. 4 residues coordinate Zn(2+): C188, C197, C200, and C203.

Belongs to the QueC family. The cofactor is Zn(2+).

It carries out the reaction 7-carboxy-7-deazaguanine + NH4(+) + ATP = 7-cyano-7-deazaguanine + ADP + phosphate + H2O + H(+). It functions in the pathway purine metabolism; 7-cyano-7-deazaguanine biosynthesis. Catalyzes the ATP-dependent conversion of 7-carboxy-7-deazaguanine (CDG) to 7-cyano-7-deazaguanine (preQ(0)). This Escherichia fergusonii (strain ATCC 35469 / DSM 13698 / CCUG 18766 / IAM 14443 / JCM 21226 / LMG 7866 / NBRC 102419 / NCTC 12128 / CDC 0568-73) protein is 7-cyano-7-deazaguanine synthase.